We begin with the raw amino-acid sequence, 399 residues long: Enoyl-[acyl-carrier-protein] reductase [NADH] (399 aa).

Residues 48 to 53 (GASTGY), 74 to 75 (FE), 111 to 112 (DA), and 139 to 140 (LA) each bind NAD(+). Y225 serves as a coordination point for substrate. Residue Y235 is the Proton donor of the active site. NAD(+) contacts are provided by residues K244 and 274–276 (VVT).

This sequence belongs to the TER reductase family. Monomer.

It carries out the reaction a 2,3-saturated acyl-[ACP] + NAD(+) = a (2E)-enoyl-[ACP] + NADH + H(+). It participates in lipid metabolism; fatty acid biosynthesis. Functionally, involved in the final reduction of the elongation cycle of fatty acid synthesis (FAS II). Catalyzes the reduction of a carbon-carbon double bond in an enoyl moiety that is covalently linked to an acyl carrier protein (ACP). This is Enoyl-[acyl-carrier-protein] reductase [NADH] from Yersinia pseudotuberculosis serotype O:1b (strain IP 31758).